Consider the following 32-residue polypeptide: Alpha-conotoxin RgIA (32 aa).

A propeptide spanning residues 1–19 (SNKRKNAAMLDMIAQHAIR) is cleaved from the precursor. Intrachain disulfides connect C21–C27 and C22–C31.

The protein belongs to the conotoxin A superfamily. In terms of processing, the disulfide bond CysI-CysIII is important for alpha-9-alpha-10 subtype inhibition, whereas the bond CysII-CysIV contributes to GABA(B) modulation. Expressed by the venom duct.

It localises to the secreted. This toxin target two types of receptors, the nicotinic acetylcholine receptor (nAChR) and the G-protein-coupled receptor GABA(B). It specifically inhibits the alpha-9-alpha-10/CHRNA9-CHRNA10 nAChR, with preference for rat receptors. It interacts with the alpha-10(+)/alpha-9(-)interface of the receptor. It shows a two order of magnitude species difference potency for the rat versus human alpha-9-alpha-10 nAChR, due to the Thr-86 located in the alpha-9 nAChR subunit. This toxin also shows inhibition of high voltage-activated (HVA) calcium channels (Cav2.2) by acting on GABA(B) receptors (GABBR1 and GABBR2). In vivo, this toxin produces an acute antinociceptive effect in peripheral nerve-injured rats, which may be related to the inhibition of immune cell buildup at the site of nerve injury. In addition, when intramuscularly injected into rats following chronic constriction injury of the sciatic nerve, this toxin protects peripheral nervous tissues as well as prevents central maladaptive plasticity by inhibiting glial cell activation. The polypeptide is Alpha-conotoxin RgIA (Conus regius (Crown cone)).